The sequence spans 465 residues: UDP-N-acetylmuramoylalanine--D-glutamate ligase (465 aa).

115 to 121 provides a ligand contact to ATP; sequence GTDGKTT.

Belongs to the MurCDEF family.

It localises to the cytoplasm. The catalysed reaction is UDP-N-acetyl-alpha-D-muramoyl-L-alanine + D-glutamate + ATP = UDP-N-acetyl-alpha-D-muramoyl-L-alanyl-D-glutamate + ADP + phosphate + H(+). The protein operates within cell wall biogenesis; peptidoglycan biosynthesis. Cell wall formation. Catalyzes the addition of glutamate to the nucleotide precursor UDP-N-acetylmuramoyl-L-alanine (UMA). The sequence is that of UDP-N-acetylmuramoylalanine--D-glutamate ligase from Chlorobaculum tepidum (strain ATCC 49652 / DSM 12025 / NBRC 103806 / TLS) (Chlorobium tepidum).